Reading from the N-terminus, the 471-residue chain is Tryptophanase (471 aa).

Residues lysine 5, lysine 115, and lysine 156 each carry the N6-acetyllysine modification. An N6-(pyridoxal phosphate)lysine modification is found at lysine 270. Residue lysine 450 is modified to N6-acetyllysine.

The protein belongs to the beta-eliminating lyase family. In terms of assembly, homotetramer. Requires pyridoxal 5'-phosphate as cofactor.

The enzyme catalyses L-tryptophan + H2O = indole + pyruvate + NH4(+). It functions in the pathway amino-acid degradation; L-tryptophan degradation via pyruvate pathway; indole and pyruvate from L-tryptophan: step 1/1. The sequence is that of Tryptophanase (tnaA) from Escherichia coli O157:H7.